The sequence spans 822 residues: ATP-dependent zinc metalloprotease FTSH 8, mitochondrial (822 aa).

Residues M1 to F25 show a composition bias toward low complexity. 3 disordered regions span residues M1–G50, N103–D131, and S202–D221. The transit peptide at M1–F93 directs the protein to the mitochondrion. Residues G108 to S127 are compositionally biased toward basic and acidic residues. G375–T382 provides a ligand contact to ATP. Residue H600 coordinates Zn(2+). E601 is a catalytic residue. Zn(2+) contacts are provided by H604 and D676. The tract at residues P781 to T822 is disordered.

This sequence in the N-terminal section; belongs to the AAA ATPase family. In the C-terminal section; belongs to the peptidase M41 family. Zn(2+) is required as a cofactor.

It is found in the mitochondrion. In terms of biological role, probable ATP-dependent zinc metallopeptidase. The sequence is that of ATP-dependent zinc metalloprotease FTSH 8, mitochondrial (FTSH8) from Oryza sativa subsp. japonica (Rice).